A 237-amino-acid polypeptide reads, in one-letter code: Proteasome subunit alpha type-5-A (237 aa).

N-acetylmethionine is present on Met-1. Glycyl lysine isopeptide (Lys-Gly) (interchain with G-Cter in ubiquitin) cross-links involve residues Lys-43 and Lys-66.

Belongs to the peptidase T1A family. In terms of assembly, component of the 20S core complex of the 26S proteasome. The 26S proteasome is composed of a core protease (CP), known as the 20S proteasome, capped at one or both ends by the 19S regulatory particle (RP/PA700). The 20S proteasome core is composed of 28 subunits that are arranged in four stacked rings, resulting in a barrel-shaped structure. The two end rings are each formed by seven alpha subunits, and the two central rings are each formed by seven beta subunits. The catalytic chamber with the active sites is on the inside of the barrel.

It localises to the cytoplasm. It is found in the nucleus. Its function is as follows. The proteasome is a multicatalytic proteinase complex which is characterized by its ability to cleave peptides with Arg, Phe, Tyr, Leu, and Glu adjacent to the leaving group at neutral or slightly basic pH. The proteasome has an ATP-dependent proteolytic activity. This chain is Proteasome subunit alpha type-5-A (PAE1), found in Arabidopsis thaliana (Mouse-ear cress).